The chain runs to 181 residues: S-fimbrial protein subunit SfaA (181 aa).

Positions 1-24 (MKLKFISMAVFSALTLGVATNASA) are cleaved as a signal peptide. Cys44 and Cys84 are disulfide-bonded.

The protein belongs to the fimbrial protein family.

The protein resides in the fimbrium. Functionally, fimbriae (also called pili), polar filaments radiating from the surface of the bacterium to a length of 0.5-1.5 micrometers and numbering 100-300 per cell, enable bacteria to colonize the epithelium of specific host organs. Its function is as follows. The major fimbrial subunit. Interacts with alpha-sialic acid-(2-3)-beta-Gal containing receptors. It belongs to the group of Mrh (Mannose-resistant hemagglutination) fimbrial proteins. The protein is S-fimbrial protein subunit SfaA (sfaA) of Escherichia coli O6:K15:H31 (strain 536 / UPEC).